The sequence spans 1030 residues: ADAMTS-like protein 4 (1030 aa).

The first 24 residues, 1–24, serve as a signal peptide directing secretion; it reads MELWLGRLWLYVMLLLLLLQLCQD. The 45-residue stretch at 47–91 folds into the TSP type-1 1 domain; it reads GPWGRWASCSQPCGVGVQRRSRTCELHPALSLPPRPPRHPEAPQP. Disordered regions lie at residues 73 to 150 and 168 to 306; these read HPAL…KPGM and LAHK…LPLT. 3 stretches are compositionally biased toward polar residues: residues 176 to 186, 211 to 237, and 245 to 257; these read KDSSTAEETLP, QSRS…SSAP, and PTSS…SFQG. Residues Asn-451 and Asn-731 are each glycosylated (N-linked (GlcNAc...) asparagine). TSP type-1 domains lie at 681 to 740, 741 to 800, 803 to 865, 866 to 925, and 926 to 982; these read CPPY…QLRL, CGHW…GPCT, WFYS…GPCE, KTWR…QGQA, and CEDQ…QPCN. The region spanning 985-1022 is the PLAC domain; the sequence is PDDQCKDSSPHCPLVVQARLCVYPYYTATCCRSCAHVL.

In terms of assembly, interacts with CTSB. Interacts with FBN1. Glycosylated. Can be O-fucosylated by POFUT2 on a serine or a threonine residue found within the consensus sequence C1-X(2)-(S/T)-C2-G of the TSP type-1 repeat domains where C1 and C2 are the first and second cysteine residue of the repeat, respectively. Fucosylated repeats can then be further glycosylated by the addition of a beta-1,3-glucose residue by the glucosyltransferase, B3GALTL. Fucosylation mediates the efficient secretion of ADAMTS family members. Can also be C-glycosylated with one or two mannose molecules on tryptophan residues within the consensus sequence W-X-X-W of the TPRs, and N-glycosylated. These other glycosylations can also facilitate secretion.

Its subcellular location is the secreted. The protein localises to the extracellular space. The protein resides in the extracellular matrix. Functionally, positive regulation of apoptosis. May facilitate FBN1 microfibril biogenesis. This is ADAMTS-like protein 4 from Rattus norvegicus (Rat).